Here is a 695-residue protein sequence, read N- to C-terminus: Elongation factor G 2 (695 aa).

In terms of domain architecture, tr-type G spans 5 to 280 (SKYRNIGIFA…AVVDYLPSPT (276 aa)). Residues 14–21 (AHVDAGKT), 78–82 (DTPGH), and 132–135 (NKLD) each bind GTP.

Belongs to the TRAFAC class translation factor GTPase superfamily. Classic translation factor GTPase family. EF-G/EF-2 subfamily.

It localises to the cytoplasm. In terms of biological role, catalyzes the GTP-dependent ribosomal translocation step during translation elongation. During this step, the ribosome changes from the pre-translocational (PRE) to the post-translocational (POST) state as the newly formed A-site-bound peptidyl-tRNA and P-site-bound deacylated tRNA move to the P and E sites, respectively. Catalyzes the coordinated movement of the two tRNA molecules, the mRNA and conformational changes in the ribosome. This Vibrio vulnificus (strain YJ016) protein is Elongation factor G 2.